A 141-amino-acid polypeptide reads, in one-letter code: Large ribosomal subunit protein uL14 (141 aa).

Belongs to the universal ribosomal protein uL14 family. In terms of assembly, part of the 50S ribosomal subunit. Forms a cluster with proteins L3 and L24e, part of which may contact the 16S rRNA in 2 intersubunit bridges.

Its function is as follows. Binds to 23S rRNA. Forms part of two intersubunit bridges in the 70S ribosome. The sequence is that of Large ribosomal subunit protein uL14 from Pyrococcus abyssi (strain GE5 / Orsay).